A 58-amino-acid polypeptide reads, in one-letter code: Small ribosomal subunit protein bS21 (58 aa).

Belongs to the bacterial ribosomal protein bS21 family.

The polypeptide is Small ribosomal subunit protein bS21 (Prochlorococcus marinus (strain MIT 9301)).